A 273-amino-acid polypeptide reads, in one-letter code: Oligodendrocyte transcription factor 3 (273 aa).

Low complexity predominate over residues 1–14; sequence MNSDSSSVSSRASS. The segment at 1–72 is disordered; the sequence is MNSDSSSVSS…KAAGESSKYK (72 aa). Over residues 24 to 34 the composition is skewed to basic residues; sequence DHHHRHHHHHQ. The segment covering 37–47 has biased composition (polar residues); it reads RLNSVSSTQGD. Residues 69 to 90 adopt a coiled-coil conformation; that stretch reads SKYKIKKQLSEQDLQQLRLKIN. The 55-residue stretch at 84–138 folds into the bHLH domain; the sequence is QLRLKINGRERKRMHDLNLAMDGLREVMPYAHGPSVRKLSKIATLLLARNYILML.

In terms of tissue distribution, weakly expressed, mainly in non-neural tissues.

It is found in the nucleus. In terms of biological role, may determine the distinct specification program of class A neurons in the dorsal part of the spinal cord and suppress specification of class B neurons. This Mus musculus (Mouse) protein is Oligodendrocyte transcription factor 3 (Olig3).